The following is a 775-amino-acid chain: MATTQASEAATEKGLPLGMDVSMVDEYASQSKLLQEFVKIPTIGNAWIFNSKTENTSRAIVSVGQTDLLANKKRSFLLNSHISKNSSNSVDFQWSPFPIEMSGVSAVIPSPSGRKLLLIRNSEDDSPTKLEVWGPCQLENEIHIAQSVHGSLYVDEWFEGISWNQEETLVAYVAEEPPQPKPEFNDSGYKKAGSSEKDCKSWKGKGDWEETWGETYSKKRIPALFVVNISSGEVRAVKGIPRTLSVGQVIWAPSSSHSLVFVAWSSDNGYQKTPRKLGIKYCFNRPCALYAVPDPFMEEADKPSLNVSKGETAPTTKLTSELSSAFFPRFSPDGKYLVFISAKSAIDSGTHNATNSMHKIDWPADGKLEGLSVADVVPIVMCPQDGCFPGLYCSGILRNPWLTDGQTMILSSIWGSKEVILSVNVVSREVSRVSPQDSDYSWNVLALDKDNILAVSSSLITVPQIYYGSEVCQTGKPNQWEWQEIATPFPSPSDKISAILADHKFSILKIPISNSSNKLADGAKLPFEAIFVSWKDSATRPTIVVLHGGPHTVYPSSYSKSLAFLYSQGYNLLVVNYRGSLGFGEEALQSLPGNIGSQDVNDVLTALDFVIKKGLIDASKVAVVGGSHGGFLTTHLIGQAPGTFVAAAARNPVCNLSLMVGTTDIPEWCFVEIYGKEGKNCFSEYPSFDDLCQFHQKSPISHISKVSTPTLFLLGAQDLRVPVSNGLQYARTLKEMGVETKIIVFPEDMHGLDKPQSDFESFLNIGVWFKKHMSK.

Active-site charge relay system residues include Ser627, Asp718, and His750.

The protein belongs to the peptidase S9C family. As to quaternary structure, homotetramer.

The protein localises to the cytoplasm. It catalyses the reaction Cleavage of an N-acetyl or N-formyl amino acid from the N-terminus of a polypeptide.. Catalyzes the hydrolysis of the N-terminal peptide bond of an N-acetylated peptide to generate an N-acetylated amino acid and a peptide with a free N-terminus. This is Acylamino-acid-releasing enzyme 1 from Oryza sativa subsp. japonica (Rice).